The chain runs to 312 residues: Pantothenate kinase (312 aa).

ATP is bound at residue 97-104 (GSVAVGKS).

Belongs to the prokaryotic pantothenate kinase family.

The protein resides in the cytoplasm. The enzyme catalyses (R)-pantothenate + ATP = (R)-4'-phosphopantothenate + ADP + H(+). Its pathway is cofactor biosynthesis; coenzyme A biosynthesis; CoA from (R)-pantothenate: step 1/5. The protein is Pantothenate kinase of Mycobacterium marinum (strain ATCC BAA-535 / M).